The primary structure comprises 623 residues: NADPH-dependent diflavin oxidoreductase 1 (623 aa).

Residues 7–168 (IVILYGSETG…VYFEYEKKVL (162 aa)) form the Flavodoxin-like domain. Residues 13–18 (SETGNA), 60–63 (STTG), 106–115 (LGDSSYPKFN), and Asp-142 each bind FMN. The FAD-binding FR-type domain maps to 224 to 491 (ESLKVGRVNI…VGPGVGLAPL (268 aa)). FAD-binding positions include Arg-383, 413–416 (RYYS), and 445–448 (GICT). 538 to 539 (SR) contributes to the NADP(+) binding site. Residue Trp-623 coordinates FAD.

This sequence belongs to the NADPH-dependent diflavin oxidoreductase NDOR1 family. The protein in the N-terminal section; belongs to the flavodoxin family. It in the C-terminal section; belongs to the flavoprotein pyridine nucleotide cytochrome reductase family. In terms of assembly, interacts with DRE2; as part of the cytosolic iron-sulfur (Fe-S) protein assembly (CIA) machinery. It depends on FAD as a cofactor. FMN is required as a cofactor.

It localises to the cytoplasm. The protein resides in the mitochondrion. The enzyme catalyses 2 oxidized [2Fe-2S]-[protein] + NADPH = 2 reduced [2Fe-2S]-[protein] + NADP(+) + H(+). NADPH-dependent reductase which is a central component of the cytosolic iron-sulfur (Fe-S) protein assembly (CIA) machinery. Transfers electrons from NADPH via its FAD and FMN prosthetic groups to the [2Fe-2S] cluster of DRE2, another key component of the CIA machinery. In turn, this reduced cluster provides electrons for assembly of cytosolic iron-sulfur cluster proteins. Positively controls H(2)O(2)-induced cell death. This is NADPH-dependent diflavin oxidoreductase 1 from Saccharomyces cerevisiae (strain ATCC 204508 / S288c) (Baker's yeast).